A 572-amino-acid polypeptide reads, in one-letter code: Zyxin (572 aa).

An N-acetylalanine modification is found at Ala2. The segment at 23 to 351 is disordered; sequence QKKFGPVVAP…VRSPGAPGPL (329 aa). Composition is skewed to pro residues over residues 63–78 and 93–108; these read IPPP…PPPL and FPPP…PPAP. A phosphoserine mark is found at Ser116, Ser142, Ser143, Ser169, and Ser170. A compositionally biased stretch (low complexity) spans 143–156; the sequence is SIDLEIDSLSSLLD. Thr179 bears the Phosphothreonine mark. Over residues 202–239 the composition is skewed to low complexity; it reads SPSSSQPLPQVPAPAQSQTQFHVQPQPQPKPQVQLHVQ. Over residues 240–252 the composition is skewed to polar residues; it reads SQTQPVSLANTQP. At Arg253 the chain carries Asymmetric dimethylarginine. Positions 253 to 265 are enriched in pro residues; the sequence is RGPPASSPAPAPK. At Ser259 the chain carries Phosphoserine. Lys265 carries the post-translational modification N6-acetyllysine. At Ser267 the chain carries Phosphoserine. Thr270 bears the Phosphothreonine mark. Lys272 is modified (N6-acetyllysine). Thr274 carries the post-translational modification Phosphothreonine. The residue at position 279 (Lys279) is an N6-acetyllysine. Phosphoserine is present on residues Ser281, Ser288, and Ser308. Residues 305-318 are compositionally biased toward polar residues; sequence GTGSPQPPSFTYAQ. Over residues 319–330 the composition is skewed to basic and acidic residues; that stretch reads QREKPRVQEKQH. Position 344 is a phosphoserine (Ser344). 3 consecutive LIM zinc-binding domains span residues 384–443, 444–503, and 504–570; these read CGRC…TLEK, CNTC…YAPR, and CSVC…TARA.

Belongs to the zyxin/ajuba family. Interacts with HPV type 6 protein E6. Does not interact significantly with E6 proteins from HPV types 11, 16, or 18. Interacts, via the Pro-rich regions, with the EVH1 domains of ENAH, EVL and VASP. Interacts with the first LIM domain of TES. Interacts with NEBL (isoform 2). Interacts with SYNPO2. As to quaternary structure, (Microbial infection) Interacts with human papillomavirus type 6/HPV6 protein E6. Does not interact significantly with E6 proteins from HPV types 11, 16, or 18.

It localises to the cytoplasm. The protein resides in the cytoskeleton. The protein localises to the nucleus. It is found in the cell junction. Its subcellular location is the focal adhesion. In terms of biological role, adhesion plaque protein. Binds alpha-actinin and the CRP protein. Important for targeting TES and ENA/VASP family members to focal adhesions and for the formation of actin-rich structures. May be a component of a signal transduction pathway that mediates adhesion-stimulated changes in gene expression. This Homo sapiens (Human) protein is Zyxin (ZYX).